A 689-amino-acid chain; its full sequence is Sodium-dependent phosphate transport protein 2B (689 aa).

A disordered region spans residues 1 to 41 (MAPWPELGDAQPNPDKYLEGAAGQQPTAPDKSKETNKNNTE). Topologically, residues 1-100 (MAPWPELGDA…LCVFQGIGRL (100 aa)) are cytoplasmic. Residues 101-121 (ILLLGFLYFFVCSLDILSSAF) form a helical membrane-spanning segment. At 122-135 (QLVGGKMAGQFFSN) the chain is on the extracellular side. A helical transmembrane segment spans residues 136–156 (SSIMSNPLLGLVIGVLVTVLV). Topologically, residues 157–212 (QSSSTSTSIVVSMVSSSLLTVRAAIPIIMGANIGTSITNTIVALMQVGDRSEFRRA) are cytoplasmic. The chain crosses the membrane as a helical span at residues 213-233 (FAGATVHDFFNWLSVLVLLPV). The Extracellular portion of the chain corresponds to 234 to 362 (EVATHYLEII…FVNFHLPDLA (129 aa)). N-linked (GlcNAc...) asparagine glycosylation is found at Asn-294, Asn-307, and Asn-320. Cys-302 and Cys-349 are disulfide-bonded. The helical transmembrane segment at 363 to 383 (VGTILLILSLLVLCGCLIMIV) threads the bilayer. Residues 384–407 (KILGSVLKGQVATVIKKTINTDFP) are Cytoplasmic-facing. The chain crosses the membrane as a helical span at residues 408–428 (FPFAWLTGYLAILVGAGMTFI). The Extracellular segment spans residues 429 to 485 (VQSSSVFTSALTPLIGIGVITIERAYPLTLGSNIGTTTTAILAALASPGNALRSSLQ). A helical membrane pass occupies residues 486–506 (IALCHFFFNISGILLWYPIPF). Residues 507 to 525 (TRLPIRMAKGLGNISAKYR) lie on the Cytoplasmic side of the membrane. The chain crosses the membrane as a helical span at residues 526-546 (WFAVFYLIIFFFLIPLTVFGL). At 547–552 (SLAGWR) the chain is on the extracellular side. The helical transmembrane segment at 553–573 (VLVGVGVPVVFIIILVLCLRL) threads the bilayer. The Cytoplasmic portion of the chain corresponds to 574–687 (LQSRCPRVLP…PASDSKTECT (114 aa)).

This sequence belongs to the SLC34A transporter family.

The protein resides in the apical cell membrane. The enzyme catalyses 3 Na(+)(out) + phosphate(out) = 3 Na(+)(in) + phosphate(in). Its function is as follows. Involved in actively transporting phosphate into cells via Na(+) cotransport. In Pongo abelii (Sumatran orangutan), this protein is Sodium-dependent phosphate transport protein 2B (SLC34A2).